Reading from the N-terminus, the 89-residue chain is Small ribosomal subunit protein uS15 (89 aa).

Belongs to the universal ribosomal protein uS15 family. As to quaternary structure, part of the 30S ribosomal subunit. Forms a bridge to the 50S subunit in the 70S ribosome, contacting the 23S rRNA.

In terms of biological role, one of the primary rRNA binding proteins, it binds directly to 16S rRNA where it helps nucleate assembly of the platform of the 30S subunit by binding and bridging several RNA helices of the 16S rRNA. Forms an intersubunit bridge (bridge B4) with the 23S rRNA of the 50S subunit in the ribosome. The polypeptide is Small ribosomal subunit protein uS15 (Janthinobacterium sp. (strain Marseille) (Minibacterium massiliensis)).